A 436-amino-acid chain; its full sequence is Gamma-glutamyl phosphate reductase (436 aa).

Belongs to the gamma-glutamyl phosphate reductase family.

It is found in the cytoplasm. The enzyme catalyses L-glutamate 5-semialdehyde + phosphate + NADP(+) = L-glutamyl 5-phosphate + NADPH + H(+). It functions in the pathway amino-acid biosynthesis; L-proline biosynthesis; L-glutamate 5-semialdehyde from L-glutamate: step 2/2. Its function is as follows. Catalyzes the NADPH-dependent reduction of L-glutamate 5-phosphate into L-glutamate 5-semialdehyde and phosphate. The product spontaneously undergoes cyclization to form 1-pyrroline-5-carboxylate. This Salinibacter ruber (strain DSM 13855 / M31) protein is Gamma-glutamyl phosphate reductase.